The primary structure comprises 277 residues: MSSCPESGSTFEYVANSHLEPVHPGEEVDLDFTREWVEFYDPDNSEQLIAADLTWLLSRWTCVFGTPACRGTVAGRPDDGCCSHGAFLSDDADRTRLDDAVKKLSHDDWQFREKGLGRKGYLELDEHDGQSQFRTRKHKNACIFLNRPGFPIGAGCALHSKALKLGVPPRTMKPDICWQLPIRHSQEWVTRPDGTEILKTTVTEYDRRSWGSGGADLHWYCTGDPASHVDSKQLWESLADELTELLGAKAYAKLAAICKRRNRLGIIAVHPATQEAK.

It belongs to the Rv0495c family.

Its function is as follows. Essential for maintaining intracellular redox homeostasis. The chain is Probable redox regulatory protein ML2435 from Mycobacterium leprae (strain TN).